Here is a 602-residue protein sequence, read N- to C-terminus: ATP-dependent lipid A-core flippase 1 (602 aa).

5 consecutive transmembrane segments (helical) span residues 36-56, 80-100, 154-174, 176-196, and 261-281; these read LGFVAAIIGMLGYAAIDVYFL, LFIIVAFTVRGIAHFIANYCL, ILTIVQQSAFIIGLLGLMFYY, WQLSLIFLLITPIIAVIVSVV, and ASVPIIQVIASFALAFVFYAI. The ABC transmembrane type-1 domain maps to 39–321; that stretch reads VAAIIGMLGY…LTNVNSEFQQ (283 aa). Positions 362 to 599 constitute an ABC transporter domain; the sequence is YKNTNTMTTS…QGAYAQLHSF (238 aa). 398-405 is an ATP binding site; it reads GRSGSGKS.

The protein belongs to the ABC transporter superfamily. Lipid exporter (TC 3.A.1.106) family. As to quaternary structure, homodimer.

It is found in the cell inner membrane. It carries out the reaction ATP + H2O + lipid A-core oligosaccharideSide 1 = ADP + phosphate + lipid A-core oligosaccharideSide 2.. Functionally, involved in lipopolysaccharide (LPS) biosynthesis. Translocates lipid A-core from the inner to the outer leaflet of the inner membrane. Transmembrane domains (TMD) form a pore in the inner membrane and the ATP-binding domain (NBD) is responsible for energy generation. The sequence is that of ATP-dependent lipid A-core flippase 1 from Colwellia psychrerythraea (strain 34H / ATCC BAA-681) (Vibrio psychroerythus).